The chain runs to 190 residues: CASP-like protein 1E1 (190 aa).

The segment at 1 to 23 (MEHESKNKVDGMEMEKGKKESGS) is disordered. Topologically, residues 1-28 (MEHESKNKVDGMEMEKGKKESGSRKGLE) are cytoplasmic. The chain crosses the membrane as a helical span at residues 29–49 (LTMRVLALVLTMVAATVLGVA). Residues 50-83 (KQTKVVPIKLIPTLPPLNVSTTAKASYLSAFVYN) are Extracellular-facing. Asn67 is a glycosylation site (N-linked (GlcNAc...) asparagine). A helical membrane pass occupies residues 84 to 104 (ISANAIACGYTAISIVIVMIS). The Cytoplasmic portion of the chain corresponds to 105-111 (KGKRSKS). Residues 112-132 (LLMAVLIGDLMMVALLFSSTG) form a helical membrane-spanning segment. Over 133-163 (AAGAIGLMGRHGNKHVMWKKVCGVFGKFCNQ) the chain is Extracellular. Residues 164–184 (AAVSVAITLIASVVFMLLVVL) traverse the membrane as a helical segment. Over 185 to 190 (DALKLP) the chain is Cytoplasmic.

It belongs to the Casparian strip membrane proteins (CASP) family. Homodimer and heterodimers.

It is found in the cell membrane. The polypeptide is CASP-like protein 1E1 (Arabidopsis thaliana (Mouse-ear cress)).